The chain runs to 453 residues: Kynurenine 3-monooxygenase (453 aa).

It belongs to the aromatic-ring hydroxylase family. KMO subfamily. Requires FAD as cofactor.

It catalyses the reaction L-kynurenine + NADPH + O2 + H(+) = 3-hydroxy-L-kynurenine + NADP(+) + H2O. The protein operates within cofactor biosynthesis; NAD(+) biosynthesis; quinolinate from L-kynurenine: step 1/3. In terms of biological role, catalyzes the hydroxylation of L-kynurenine (L-Kyn) to form 3-hydroxy-L-kynurenine (L-3OHKyn). Required for synthesis of quinolinic acid. This Salinispora tropica (strain ATCC BAA-916 / DSM 44818 / JCM 13857 / NBRC 105044 / CNB-440) protein is Kynurenine 3-monooxygenase.